The chain runs to 139 residues: D-ribose pyranase (139 aa).

Histidine 20 functions as the Proton donor in the catalytic mechanism. Residues aspartate 28, histidine 106, and 128–130 (YAN) each bind substrate.

This sequence belongs to the RbsD / FucU family. RbsD subfamily. As to quaternary structure, homodecamer.

It is found in the cytoplasm. It carries out the reaction beta-D-ribopyranose = beta-D-ribofuranose. It functions in the pathway carbohydrate metabolism; D-ribose degradation; D-ribose 5-phosphate from beta-D-ribopyranose: step 1/2. Its function is as follows. Catalyzes the interconversion of beta-pyran and beta-furan forms of D-ribose. This chain is D-ribose pyranase, found in Photobacterium profundum (strain SS9).